The sequence spans 812 residues: Protein FAM83G (812 aa).

Position 2 is an N-acetylalanine (alanine 2). The interval 2 to 312 (AFSQVQCLDD…LYLMSQSVSL (311 aa)) is DUF1669. Serine 4 carries the post-translational modification Phosphoserine. Residues 76-119 (PGSEDPRVSGRRPEPQDNGGADASEETSAAGGPPATETLPSLEY) are disordered. The span at 79–90 (EDPRVSGRRPEP) shows a compositional bias: basic and acidic residues. Phosphoserine occurs at positions 124, 127, and 356. Disordered stretches follow at residues 362–389 (KSSS…GDLS), 455–509 (ASAQ…KPRT), and 521–812 (SDIG…HKEP). Residues 455–467 (ASAQHQLWKQSQG) show a composition bias toward polar residues. Over residues 471-480 (CPAPCPPPAP) the composition is skewed to pro residues. The segment covering 545-562 (STASESEVPQQQHSSMTQ) has biased composition (polar residues). A compositionally biased stretch (acidic residues) spans 576–586 (LDEDEDDDDDY). Residues 589–598 (LSDQDSLSGS) are compositionally biased toward low complexity. 4 positions are modified to phosphoserine: serine 609, serine 613, serine 615, and serine 649. The segment covering 721–731 (SSSKKASPAAA) has biased composition (low complexity). Positions 761 to 772 (LRAELRATEEHA) are enriched in basic and acidic residues.

The protein belongs to the FAM83 family. Interacts with SMAD1 (via MH2 domain); in a SMAD4-independent manner. Directly interacts (via DUF1669) with casein kinase isoforms CSNK1A1 and CSNK1A1L. BMP signaling induces the phosphorylation by BMPR1A at Ser-609, Ser-613 and Ser-615. Phosphorylation at Ser-609 is necessary for the activation of SMAD4-independent BMP target genes such as NEDD9 and ASNS. In terms of processing, phosphorylated by CSNK1A1.

The protein localises to the cytoplasm. It is found in the cytosol. The protein resides in the nucleus. Functionally, substrate for type I BMP receptor kinase involved in regulation of some target genes of the BMP signaling pathway. Also regulates the expression of several non-BMP target genes, suggesting a role in other signaling pathways. The polypeptide is Protein FAM83G (Fam83g) (Mus musculus (Mouse)).